The following is a 375-amino-acid chain: 2-methylcitrate synthase (375 aa).

Positions 72 and 187 each coordinate substrate. Residue His222 is part of the active site. 255-259 contributes to the CoA binding site; that stretch reads KIMGF. Residue His261 is part of the active site. Residue Arg270 participates in substrate binding. The active site involves Asp312. Substrate contacts are provided by Arg337 and Arg356.

The protein belongs to the citrate synthase family. In terms of assembly, homodimer.

The catalysed reaction is propanoyl-CoA + oxaloacetate + H2O = (2S,3S)-2-methylcitrate + CoA + H(+). It catalyses the reaction oxaloacetate + acetyl-CoA + H2O = citrate + CoA + H(+). It functions in the pathway organic acid metabolism; propanoate degradation. Its pathway is carbohydrate metabolism; tricarboxylic acid cycle; isocitrate from oxaloacetate: step 1/2. Its function is as follows. Involved in the catabolism of short chain fatty acids (SCFA) via the tricarboxylic acid (TCA)(acetyl degradation route) and via the 2-methylcitrate cycle II (propionate degradation route). Catalyzes the Claisen condensation of propionyl-CoA and oxaloacetate (OAA) to yield 2-methylcitrate (2-MC) and CoA. Catalyzes the condensation of oxaloacetate with acetyl-CoA. The protein is 2-methylcitrate synthase (prpC) of Shewanella oneidensis (strain ATCC 700550 / JCM 31522 / CIP 106686 / LMG 19005 / NCIMB 14063 / MR-1).